Consider the following 400-residue polypeptide: Glycerol-3-phosphate dehydrogenase [NAD(+)] 1, chloroplastic (400 aa).

A chloroplast-targeting transit peptide spans 1 to 32 (MRFRSFFFSSSIFSLSHSRSPSLSSSRFSSLS). NAD(+) contacts are provided by residues 61–66 (GSGNWG), phenylalanine 92, phenylalanine 149, lysine 172, and alanine 205. Lysine 172 contacts substrate. Lysine 257 functions as the Proton acceptor in the catalytic mechanism. 3 residues coordinate NAD(+): arginine 321, lysine 350, and glutamine 352. Substrate is bound at residue 321-322 (RN).

This sequence belongs to the NAD-dependent glycerol-3-phosphate dehydrogenase family. Expressed in young seedlings, flowers and siliques. Expressed at low levels in roots.

The protein resides in the plastid. Its subcellular location is the chloroplast. The enzyme catalyses sn-glycerol 3-phosphate + NAD(+) = dihydroxyacetone phosphate + NADH + H(+). It functions in the pathway membrane lipid metabolism; glycerophospholipid metabolism. In terms of biological role, involved in glycerolipid metabolism. The sequence is that of Glycerol-3-phosphate dehydrogenase [NAD(+)] 1, chloroplastic (DHAPRD) from Arabidopsis thaliana (Mouse-ear cress).